We begin with the raw amino-acid sequence, 305 residues long: tRNA pseudouridine synthase B (305 aa).

Asp48 serves as the catalytic Nucleophile.

It belongs to the pseudouridine synthase TruB family. Type 1 subfamily.

It carries out the reaction uridine(55) in tRNA = pseudouridine(55) in tRNA. Its function is as follows. Responsible for synthesis of pseudouridine from uracil-55 in the psi GC loop of transfer RNAs. The protein is tRNA pseudouridine synthase B of Stutzerimonas stutzeri (strain A1501) (Pseudomonas stutzeri).